The following is a 1205-amino-acid chain: Nitric oxide synthase 3 (1205 aa).

2 disordered regions span residues 1–20 (MGNL…LGLG) and 26–73 (CGKQ…FPRV). Residues 33–47 (SPAPEPSWAPAPATP) are compositionally biased toward pro residues. Positions 96 and 101 each coordinate Zn(2+). An interaction with NOSIP region spans residues 100 to 489 (RCLGSLVLPR…PDPWKGSAAK (390 aa)). Position 104 (Ser-104) interacts with (6R)-L-erythro-5,6,7,8-tetrahydrobiopterin. Phosphoserine is present on Ser-116. Cys-186 is a binding site for heme b. L-arginine-binding residues include Gln-250, Trp-359, Tyr-360, and Glu-364. Arg-368 serves as a coordination point for (6R)-L-erythro-5,6,7,8-tetrahydrobiopterin. Asn-369 provides a ligand contact to L-arginine. (6R)-L-erythro-5,6,7,8-tetrahydrobiopterin-binding residues include Ala-449, Trp-450, and Phe-463. Tyr-478 provides a ligand contact to heme b. A Phosphothreonine modification is found at Thr-498. Residues Ser-529, Glu-530, Thr-531, Arg-533, Ser-575, and Thr-576 each coordinate FMN. Phosphoserine occurs at positions 618, 636, and 641. The FMN site is built by Ser-657, Cys-664, Glu-690, and Gln-694. An NADP(+)-binding site is contributed by Arg-781. The disordered stretch occupies residues 796–850 (LQYQPGDHISPHPPPRSSHRPGQGGPRVAPFSERPLMPRTPPPGGPPPSWVRDPR). His-803 lines the FAD pocket. Residues 833–844 (PRTPPPGGPPPS) are compositionally biased toward pro residues. 5 residues coordinate FAD: Arg-939, Tyr-941, Ser-942, Thr-957, and Ala-959. NADP(+) contacts are provided by Thr-1018, Arg-1051, Ser-1080, Arg-1081, Lys-1087, Tyr-1089, and Gln-1091. Position 1177 is a phosphothreonine (Thr-1177). 2 positions are modified to phosphoserine: Ser-1179 and Ser-1181.

It belongs to the NOS family. Homodimer. Interacts with NOSIP and NOSTRIN. Interacts with HSP90AB1. Forms a complex with ASL, ASS1 and SLC7A1; the complex regulates cell-autonomous L-arginine synthesis and citrulline recycling while channeling extracellular L-arginine to nitric oxide synthesis pathway. Heme b is required as a cofactor. It depends on FAD as a cofactor. FMN serves as cofactor. The cofactor is (6R)-L-erythro-5,6,7,8-tetrahydrobiopterin.

Its subcellular location is the membrane. It localises to the caveola. It is found in the cytoplasm. The protein localises to the cytoskeleton. The protein resides in the golgi apparatus. Its subcellular location is the cell membrane. The enzyme catalyses 2 L-arginine + 3 NADPH + 4 O2 + H(+) = 2 L-citrulline + 2 nitric oxide + 3 NADP(+) + 4 H2O. Stimulated by calcium/calmodulin. Inhibited by NOSIP and NOSTRIN. Functionally, produces nitric oxide (NO) which is implicated in vascular smooth muscle relaxation through a cGMP-mediated signal transduction pathway. NO mediates vascular endothelial growth factor (VEGF)-induced angiogenesis in coronary vessels and promotes blood clotting through the activation of platelets. This Ovis aries (Sheep) protein is Nitric oxide synthase 3 (NOS3).